Reading from the N-terminus, the 338-residue chain is MKSVGINGYGTIGKRVADAVSAQDDMKIVGVTKRSPDFEARMAVENGYDLYISVPERESSFEEAGIKVTGTADELLEKLDIVVDCTPEGIGAKNKEGTYEKMGLKAIFQGGEKHDQIGLSFNSFSNYNDVIGKDYARVVSCNTTGLCRTLNPINDLCGIKKVRAVMVRRGADPGQVKKGPINAIVPNPPTVPSHHGPDVQTVMYDLNITTMALLVPTTLMHQHNLMVELESSVSVDDIKEKLNETPRVLLLKAGEGLTSTAGFMEYAKDLGRSRNDLFEIGVWEESLNIVDGELYYMQAIHQESDVVPENVDAIRAMLEMENDPSKSIQKTNKAMGIL.

NAD(+)-binding positions include 11–12 (TI) and glycine 111. 140 to 142 (SCN) is a D-glyceraldehyde 3-phosphate binding site. The active-site Nucleophile is cysteine 141. Arginine 169 contributes to the NAD(+) binding site. Residue 195-196 (HG) participates in D-glyceraldehyde 3-phosphate binding. Glutamine 302 is a binding site for NAD(+).

It belongs to the glyceraldehyde-3-phosphate dehydrogenase family. In terms of assembly, homotetramer.

Its subcellular location is the cytoplasm. The enzyme catalyses D-glyceraldehyde 3-phosphate + phosphate + NADP(+) = (2R)-3-phospho-glyceroyl phosphate + NADPH + H(+). The catalysed reaction is D-glyceraldehyde 3-phosphate + phosphate + NAD(+) = (2R)-3-phospho-glyceroyl phosphate + NADH + H(+). It functions in the pathway carbohydrate degradation; glycolysis; pyruvate from D-glyceraldehyde 3-phosphate: step 1/5. The chain is Glyceraldehyde-3-phosphate dehydrogenase (gap) from Methanobacterium bryantii.